Consider the following 224-residue polypeptide: MYQNSEAGSLGRVVKGSWSDEEDDLLRKCIQKYGEGNWKRVPERAGLNRCRKSCRWRWLNYLKPSIKRGHFNEDEVKFIIQQHKLLGNRWSLIAAKLPGRTINDVKNYCNTHLYKKHSIENIPAPATNTMTHNTSSCVERPESSAAIKEPTWWENILVELQREEKEGKSQNCSGLDFEQDNLGQQDPNINDGMDQWLNSLREVPNLSYQWEENLLDFDVVNLWA.

2 consecutive HTH myb-type domains span residues 10-66 and 67-117; these read LGRV…KPSI and KRGH…YKKH. 2 consecutive DNA-binding regions (H-T-H motif) follow at residues 38–62 and 90–113; these read WKRV…LNYL and WSLI…NTHL.

It is found in the nucleus. Its function is as follows. Activates DODA1 and CYP76AD1 in the betalain red pigment pathway. This Beta vulgaris (Sugar beet) protein is Transcription factor MYB1.